We begin with the raw amino-acid sequence, 117 residues long: Large ribosomal subunit protein bL17 (117 aa).

It belongs to the bacterial ribosomal protein bL17 family. Part of the 50S ribosomal subunit. Contacts protein L32.

The protein is Large ribosomal subunit protein bL17 of Thermomicrobium roseum (strain ATCC 27502 / DSM 5159 / P-2).